Reading from the N-terminus, the 708-residue chain is Protein MICRORCHIDIA 5 (708 aa).

The segment covering 1-11 has biased composition (polar residues); it reads MAESGSTNPKS. The tract at residues 1 to 47 is disordered; that stretch reads MAESGSTNPKSPSVVPDSTLGGLKRDLRNYHDGDDSNNLSIKKSKTT. The span at 23-34 shows a compositional bias: basic and acidic residues; sequence LKRDLRNYHDGD. Residues 590-665 adopt a coiled-coil conformation; the sequence is SVNLEAELQK…LENRQEGVST (76 aa). The short motif at 672-679 is the Nuclear localization signal element; the sequence is ARRDVTED.

This sequence belongs to the MORC ATPase protein family. In terms of assembly, homodimer and heterodimer. Component of an RNA-directed DNA methylation (RdDM) complex. Mg(2+) is required as a cofactor. The cofactor is Mn(2+).

It is found in the nucleus. In terms of biological role, exhibits ATPase activity. Binds DNA/RNA in a non-specific manner and exhibits endonuclease activity. Probably involved in DNA repair. Involved in RNA-directed DNA methylation (RdDM) as a component of the RdDM machinery and required for gene silencing. May also be involved in the regulation of chromatin architecture to maintain gene silencing. The chain is Protein MICRORCHIDIA 5 from Arabidopsis thaliana (Mouse-ear cress).